Reading from the N-terminus, the 259-residue chain is Small ribosomal subunit protein uS2 (259 aa).

It belongs to the universal ribosomal protein uS2 family.

This Streptococcus pneumoniae (strain Hungary19A-6) protein is Small ribosomal subunit protein uS2.